We begin with the raw amino-acid sequence, 320 residues long: MSVGFIGAGQLAFALAKGFTAAGVVAAHKIMASSPDMDLATVSALRKMGVNLTHHNKETVQHSDVLFLAVKPHIIPFILDEIAANIEARHIVVSCAAGVTISSIEKKLTAFQPAPKVIRCMTNTPVVVREGATVYATGTHAQVEDGRLLEQLMSSVGFCTEVEEDLIDAVTGLSGSGPAYAFTALDALADGGVKMGLPRRLAVRLGAQALLGAAKMLLDSEQHPGQLKDNVCSPGGATIHALHVLESGGFRSLLIKAVEASCTRTRELQSMADQEKVSPAAIKKTILDKVKLDSPPGTSLAPSGHSKLLPRSMAPAGKQD.

Ser-2 is modified (N-acetylserine). NADP(+)-binding positions include 6–11 and Ser-34; that span reads IGAGQL. The NADPH site is built by Ala-8, Gln-10, Leu-11, Ser-34, Asp-36, Asn-56, Val-70, Lys-71, and Ala-97. Residues Asn-56, 69–72, and 95–97 contribute to the NADP(+) site; these read AVKP and CAA. Glu-164 is an L-proline binding site. Asn-230 contacts NADPH. Residues Ala-237 and Thr-238 each contribute to the L-proline site. Ser-278 carries the phosphoserine modification. Positions 292 to 320 are disordered; sequence LDSPPGTSLAPSGHSKLLPRSMAPAGKQD.

Belongs to the pyrroline-5-carboxylate reductase family. In terms of assembly, homodecamer; composed of 5 homodimers. Interacts with LTO1.

It localises to the mitochondrion. The enzyme catalyses L-proline + NADP(+) = (S)-1-pyrroline-5-carboxylate + NADPH + 2 H(+). The catalysed reaction is L-proline + NAD(+) = (S)-1-pyrroline-5-carboxylate + NADH + 2 H(+). It participates in amino-acid biosynthesis; L-proline biosynthesis; L-proline from L-glutamate 5-semialdehyde: step 1/1. Functionally, oxidoreductase that catalyzes the last step in proline biosynthesis, which corresponds to the reduction of pyrroline-5-carboxylate to L-proline using NAD(P)H. At physiologic concentrations, has higher specific activity in the presence of NADH. Involved in the cellular response to oxidative stress. In Bos taurus (Bovine), this protein is Pyrroline-5-carboxylate reductase 1, mitochondrial (PYCR1).